The primary structure comprises 314 residues: Tyrosine recombinase XerC (314 aa).

One can recognise a Core-binding (CB) domain in the interval 1-85; sequence MNEQVEAFLR…AVKSFFTFLT (85 aa). The 186-residue stretch at 106 to 291 folds into the Tyr recombinase domain; the sequence is DLPRALTPRQ…NHESSHTPHA (186 aa). Catalysis depends on residues R147, K171, H243, R246, and H269. Catalysis depends on Y278, which acts as the O-(3'-phospho-DNA)-tyrosine intermediate. Positions 284 to 314 are disordered; the sequence is ESSHTPHAHPAPRASEVNGVRDEQALVPEEK. The span at 302–314 shows a compositional bias: basic and acidic residues; the sequence is GVRDEQALVPEEK.

The protein belongs to the 'phage' integrase family. XerC subfamily. Forms a cyclic heterotetrameric complex composed of two molecules of XerC and two molecules of XerD.

The protein resides in the cytoplasm. Site-specific tyrosine recombinase, which acts by catalyzing the cutting and rejoining of the recombining DNA molecules. The XerC-XerD complex is essential to convert dimers of the bacterial chromosome into monomers to permit their segregation at cell division. It also contributes to the segregational stability of plasmids. The protein is Tyrosine recombinase XerC of Roseiflexus castenholzii (strain DSM 13941 / HLO8).